The following is a 72-amino-acid chain: Translation initiation factor IF-1 1 (72 aa).

The 72-residue stretch at 1 to 72 folds into the S1-like domain; sequence MAKEDRIEMQ…SRARIIFRAK (72 aa).

The protein belongs to the IF-1 family. As to quaternary structure, component of the 30S ribosomal translation pre-initiation complex which assembles on the 30S ribosome in the order IF-2 and IF-3, IF-1 and N-formylmethionyl-tRNA(fMet); mRNA recruitment can occur at any time during PIC assembly.

It is found in the cytoplasm. One of the essential components for the initiation of protein synthesis. Stabilizes the binding of IF-2 and IF-3 on the 30S subunit to which N-formylmethionyl-tRNA(fMet) subsequently binds. Helps modulate mRNA selection, yielding the 30S pre-initiation complex (PIC). Upon addition of the 50S ribosomal subunit IF-1, IF-2 and IF-3 are released leaving the mature 70S translation initiation complex. This chain is Translation initiation factor IF-1 1, found in Methylobacillus flagellatus (strain ATCC 51484 / DSM 6875 / VKM B-1610 / KT).